The sequence spans 426 residues: Glucose-1-phosphate adenylyltransferase (426 aa).

Alpha-D-glucose 1-phosphate is bound by residues Gly-165, 180–181 (EK), and Ser-191.

This sequence belongs to the bacterial/plant glucose-1-phosphate adenylyltransferase family. In terms of assembly, homotetramer.

It carries out the reaction alpha-D-glucose 1-phosphate + ATP + H(+) = ADP-alpha-D-glucose + diphosphate. The protein operates within glycan biosynthesis; glycogen biosynthesis. In terms of biological role, involved in the biosynthesis of ADP-glucose, a building block required for the elongation reactions to produce glycogen. Catalyzes the reaction between ATP and alpha-D-glucose 1-phosphate (G1P) to produce pyrophosphate and ADP-Glc. The chain is Glucose-1-phosphate adenylyltransferase from Ruminiclostridium cellulolyticum (strain ATCC 35319 / DSM 5812 / JCM 6584 / H10) (Clostridium cellulolyticum).